Reading from the N-terminus, the 365-residue chain is MPEITVRAKSKTYPVYINEFALEDVREKWTESLAKFSHVFVLTDEHVAELHKAKLDAVLADLPVVTYYVAPNGEEAKTFRVYEDVMTKLIETGLDRKAVLIAFGGGVIGDLGGFVAATYMRGIPFYQVPTTVLAHDSAVGGKVAINHPLGKNMIGNFYQPEAVIYDTQFFATLPEREMRSGFAEMIKHALISDQTLLRALMDTFTEPKDFYTKDLTPFLQRGIEIKANIVAQDETEQGVRAYLNFGHTFGHALEAYGNFGKWLHGEAITYGMIYALTMSETIYGLDFDLAEFKTWLKQLGYDTTFDATVPFNKILENMRHDKKTTFNEISMVLLEEIGKPVIFKAEDDLIFETYKRVMRNGGNGI.

NAD(+) contacts are provided by residues G106–D110, T130–T131, K142, K151, and F169–T172. Zn(2+)-binding residues include E184, H247, and H264.

Belongs to the sugar phosphate cyclases superfamily. Dehydroquinate synthase family. Requires Co(2+) as cofactor. Zn(2+) is required as a cofactor. The cofactor is NAD(+).

Its subcellular location is the cytoplasm. The catalysed reaction is 7-phospho-2-dehydro-3-deoxy-D-arabino-heptonate = 3-dehydroquinate + phosphate. Its pathway is metabolic intermediate biosynthesis; chorismate biosynthesis; chorismate from D-erythrose 4-phosphate and phosphoenolpyruvate: step 2/7. In terms of biological role, catalyzes the conversion of 3-deoxy-D-arabino-heptulosonate 7-phosphate (DAHP) to dehydroquinate (DHQ). In Listeria monocytogenes serotype 4b (strain CLIP80459), this protein is 3-dehydroquinate synthase.